Here is a 216-residue protein sequence, read N- to C-terminus: Transmembrane emp24 domain-containing protein eca (216 aa).

The signal sequence occupies residues 1 to 20 (MRDQWICLALVLCALHSACG). The Lumenal portion of the chain corresponds to 21–183 (LYFHISETER…RHTSESTNSR (163 aa)). The region spanning 30–126 (RKCFIEEVPD…QLRVHLDIQV (97 aa)) is the GOLD domain. Residues 134–164 (ANVAQKEKLTELQLRIRQLLDQVEQITKEQN) are a coiled coil. A helical transmembrane segment spans residues 184–203 (VLWWSLAQTVVLVCMGFWQM). Residues 204 to 216 (RHLKSFFEAKKLV) are Cytoplasmic-facing. Residues 213 to 216 (KKLV) carry the Prevents secretion from ER motif.

It belongs to the EMP24/GP25L family.

It localises to the endoplasmic reticulum membrane. Its function is as follows. Eca and bai are essential, though not redundant, for dorsoventral patterning of the embryo. Specifically required during early embryogenesis for the activity of maternal tkv, while the zygotic tkv is not affected. In Drosophila mojavensis (Fruit fly), this protein is Transmembrane emp24 domain-containing protein eca.